We begin with the raw amino-acid sequence, 662 residues long: Mitochondrial Rho GTPase 1 (662 aa).

Topologically, residues Met1–Ala634 are cytoplasmic. Positions Lys3 to His185 constitute a Miro 1 domain. Residues Gly12 to Ser19, Asp62 to Ser64, and Asn116 to Asp119 contribute to the GTP site. 2 EF-hand domains span residues Leu201 to Lys236 and Lys330 to Leu365. Positions 214, 216, 218, 220, 225, 343, 345, 347, and 354 each coordinate Ca(2+). In terms of domain architecture, Miro 2 spans Arg446 to Asp611. GTP contacts are provided by residues Gly455–Ser462, Glu491–Gly495, and Ser560–Asp563. Residues Leu635–Phe655 form a helical; Anchor for type IV membrane protein membrane-spanning segment. Residues Lys656–Lys662 are Mitochondrial intermembrane-facing.

The protein belongs to the mitochondrial Rho GTPase family.

It is found in the mitochondrion outer membrane. In terms of biological role, mitochondrial GTPase involved in mitochondrial trafficking. Probably involved in control of anterograde transport of mitochondria and their subcellular distribution. The polypeptide is Mitochondrial Rho GTPase 1 (GEM1) (Saccharomyces cerevisiae (strain ATCC 204508 / S288c) (Baker's yeast)).